The chain runs to 424 residues: Folate-like transporter 3 (424 aa).

An N-linked (GlcNAc...) asparagine glycan is attached at Asn35. Transmembrane regions (helical) follow at residues 55 to 75 (VALIPSFLLTDVLLYKPILII), 78 to 98 (LSYFACWMIFVFGRSVWCMQL), 101 to 119 (LFYGWATATEIAYFAYIYV), 136 to 156 (ALLVGRFLAYTLAQLLIGLNW), and 164 to 184 (IINLVSMTFAVFLAAILPHVP). Asn254 carries an N-linked (GlcNAc...) asparagine glycan. The next 3 membrane-spanning stretches (helical) occupy residues 313–333 (GLLFWMSQSHEIIILYICYII), 361–381 (LFGINTFVALALQSILTAIVI), and 392–412 (FVVYSGYHIVVATLFGIIFGI).

The protein belongs to the reduced folate carrier (RFC) transporter (TC 2.A.48) family.

It localises to the membrane. The polypeptide is Folate-like transporter 3 (folt-3) (Caenorhabditis elegans).